A 365-amino-acid polypeptide reads, in one-letter code: MTELKKTPLFDLYEQYGGKVIDFGGWALPVQFSSIKEEHEAVRTKAGLFDVSHMGEVEVTGAQALNYLQRLVTNDVSKIKDGQAQYTAMCYENGGTVDDLLIYRRSEDQYLLVINAANIDKDIAWMEKHAIDGVSITNVSNQTAQLALQGPVAENVLQTLTEEPLADIKFFRFVDGVNIAGVNVLLSRTGYTGEDGFELYCLAEDAPVLWKKLIEAGKEHGVVPCGLGARDTLRFEAKLPLYGQELTKDISPIEAGIGFAVKVDKEDFIGKEILKKQKEQGAPRKLVGLEMVDKGIPRTGYEVYVDNQKIGFVTTGTQSPTLKKNVGLALLQAEHSELGTEVIVHVRKRQLIAKVVATPFYKRGN.

It belongs to the GcvT family. In terms of assembly, the glycine cleavage system is composed of four proteins: P, T, L and H.

It catalyses the reaction N(6)-[(R)-S(8)-aminomethyldihydrolipoyl]-L-lysyl-[protein] + (6S)-5,6,7,8-tetrahydrofolate = N(6)-[(R)-dihydrolipoyl]-L-lysyl-[protein] + (6R)-5,10-methylene-5,6,7,8-tetrahydrofolate + NH4(+). Functionally, the glycine cleavage system catalyzes the degradation of glycine. The chain is Aminomethyltransferase from Halalkalibacterium halodurans (strain ATCC BAA-125 / DSM 18197 / FERM 7344 / JCM 9153 / C-125) (Bacillus halodurans).